The chain runs to 276 residues: Large ribosomal subunit protein uL2c (276 aa).

Positions 221 to 276 are disordered; it reads RGSVMNPVDHPHGGGEGRAPIGRSRPVTPWGKPALGQKTRKPKKQSNKLILRKRKK. The segment covering 258–276 has biased composition (basic residues); that stretch reads KTRKPKKQSNKLILRKRKK.

This sequence belongs to the universal ribosomal protein uL2 family. As to quaternary structure, part of the 50S ribosomal subunit.

The protein resides in the plastid. The protein localises to the chloroplast. This Stigeoclonium helveticum (Green alga) protein is Large ribosomal subunit protein uL2c (rpl2).